Here is an 829-residue protein sequence, read N- to C-terminus: MKLSRRDFMKANAVAAAAAAAGLTIPTVARAVTDAGSDGITWDKAPCRFCGTGCGVLVGTQNGRIVASQGDPDAPVNRGLNCIKGYFLPKIMYGKDRLTQPLLRMKGGQYDKEGEFTPVSWDQAFDVMAAKFKGTLKEKGPGAVGMFGSGQWTVWEGYAAAKLFKAGFRSNNLDPNARHCMASAVVGFMRTFGMDEPMGCYDDIEQADAFVLWGSNMAEMHPILWSRITNRRLSNDKVQVAVLSTFEQRSFELADNPIIFTPQSDLVILNYIANYIIQNNAVDQAFMDKHVNIRKGATDIGYGLRPTDPLEKAAKNPGSDASEPMSFDDYKAFVADYTLEKTAKMTGVPQDQLLALAKLYADPNIKVVSYWTMGFNQHTRGVWANNLCYNIHLLTGKISKPGCGPFSLTGQPSACGTAREVGTFAHRLPADMVVTNEKHRQIAETRWKIPAGTIPDKVGLHAVAQDRALKDGKLNAYWVMCNNNMQAGPNINADRMPGWRDPRNFIVVSDPYPTVSALSADLILPTAMWVEKEGAYGNAERRTQFWHQQVKAPGEAKSDLWQLMEFSKRFTVDEVWPAALLAKMPALQGKTLYEVLYVNGNVDRYPLDEVPADRLNDEARACGFYVQKGLFEEYAGFGRGHGHDLAPFDAYHKARGIRWPVVDGKETLWRYREGYDPFVKNGEEVRFYGKPDGKAVIFALPYEPPAESPDQEYDLWLSTGRVLEHWHTGSMTRRVPELHRAFPEAVLFIHPLDAKARGLRRGDKVKVMSRRGELVSIVETRGRNRVPQGLVYMPFFDAAQLVNVLTLDATDPLSKEADFKKCAVKIEKV.

The segment at residues 1 to 31 (MKLSRRDFMKANAVAAAAAAAGLTIPTVARA) is a signal peptide (tat-type signal). The 4Fe-4S Mo/W bis-MGD-type domain maps to 40–96 (ITWDKAPCRFCGTGCGVLVGTQNGRIVASQGDPDAPVNRGLNCIKGYFLPKIMYGKD). [4Fe-4S] cluster contacts are provided by C47, C50, C54, and C82. Mo-bis(molybdopterin guanine dinucleotide) contacts are provided by residues K84, Q151, N176, C180, 213–220 (WGSNMAEM), 263–265 (QSD), M373, Q377, N483, 509–510 (SD), K532, D559, and 719–728 (TGRVLEHWHT). Residue F795 participates in substrate binding. Mo-bis(molybdopterin guanine dinucleotide)-binding residues include N803 and K820.

Belongs to the prokaryotic molybdopterin-containing oxidoreductase family. NasA/NapA/NarB subfamily. Component of the periplasmic nitrate reductase NapAB complex composed of NapA and NapB. It depends on [4Fe-4S] cluster as a cofactor. Mo-bis(molybdopterin guanine dinucleotide) is required as a cofactor. Predicted to be exported by the Tat system. The position of the signal peptide cleavage has not been experimentally proven.

It localises to the periplasm. The enzyme catalyses 2 Fe(II)-[cytochrome] + nitrate + 2 H(+) = 2 Fe(III)-[cytochrome] + nitrite + H2O. Functionally, catalytic subunit of the periplasmic nitrate reductase complex NapAB. Receives electrons from NapB and catalyzes the reduction of nitrate to nitrite. The polypeptide is Periplasmic nitrate reductase (Edwardsiella ictaluri (strain 93-146)).